The following is a 437-amino-acid chain: Homogentisate 1,2-dioxygenase (437 aa).

Residues 15 to 34 (NEHATSDPRVPDALPVGQNS) form a disordered region. Fe cation-binding residues include H336, E342, and H372.

Belongs to the homogentisate dioxygenase family. The cofactor is Fe cation. As to expression, expressed in the hypodermis and intestine.

It carries out the reaction homogentisate + O2 = 4-maleylacetoacetate + H(+). It participates in amino-acid degradation; L-phenylalanine degradation; acetoacetate and fumarate from L-phenylalanine: step 4/6. Plays a role in the tyrosine degradation pathway. This is Homogentisate 1,2-dioxygenase from Caenorhabditis elegans.